The chain runs to 291 residues: Phosphoribosylaminoimidazole-succinocarboxamide synthase (291 aa).

Belongs to the SAICAR synthetase family.

It carries out the reaction 5-amino-1-(5-phospho-D-ribosyl)imidazole-4-carboxylate + L-aspartate + ATP = (2S)-2-[5-amino-1-(5-phospho-beta-D-ribosyl)imidazole-4-carboxamido]succinate + ADP + phosphate + 2 H(+). It participates in purine metabolism; IMP biosynthesis via de novo pathway; 5-amino-1-(5-phospho-D-ribosyl)imidazole-4-carboxamide from 5-amino-1-(5-phospho-D-ribosyl)imidazole-4-carboxylate: step 1/2. The chain is Phosphoribosylaminoimidazole-succinocarboxamide synthase (ADE1) from Candida maltosa (Yeast).